The following is a 338-amino-acid chain: 1-aminocyclopropane-1-carboxylate deaminase (338 aa).

An N6-(pyridoxal phosphate)lysine modification is found at Lys51. Ser78 functions as the Nucleophile in the catalytic mechanism.

This sequence belongs to the ACC deaminase/D-cysteine desulfhydrase family. As to quaternary structure, homotrimer. Requires pyridoxal 5'-phosphate as cofactor.

The enzyme catalyses 1-aminocyclopropane-1-carboxylate + H2O = 2-oxobutanoate + NH4(+). In terms of biological role, catalyzes a cyclopropane ring-opening reaction, the irreversible conversion of 1-aminocyclopropane-1-carboxylate (ACC) to ammonia and alpha-ketobutyrate. Allows growth on ACC as a nitrogen source. The protein is 1-aminocyclopropane-1-carboxylate deaminase of Pseudomonas putida (Arthrobacter siderocapsulatus).